A 177-amino-acid polypeptide reads, in one-letter code: Adenylate kinase (177 aa).

13 to 18 provides a ligand contact to ATP; the sequence is GCGKGT. The segment at 33–62 is NMP; that stretch reads SSGDIIREEMKKSSKEATVIREMVNSGRLA. AMP is bound by residues Ser34, Arg39, 60–62, 85–88, and Gln92; these read RLA and GYPR. The tract at residues 119–127 is LID; sequence GRNEGRDDD. Arg120 lines the ATP pocket. AMP-binding residues include Arg124 and Arg135.

The protein belongs to the adenylate kinase family. As to quaternary structure, monomer.

It localises to the cytoplasm. The enzyme catalyses AMP + ATP = 2 ADP. Its function is as follows. Catalyzes the reversible transfer of the terminal phosphate group between ATP and AMP. Plays an important role in cellular energy homeostasis and in adenine nucleotide metabolism. The sequence is that of Adenylate kinase from Encephalitozoon cuniculi (strain GB-M1) (Microsporidian parasite).